Here is a 367-residue protein sequence, read N- to C-terminus: Heparan sulfate glucosamine 3-O-sulfotransferase 2 (367 aa).

At 1–19 (MAYRVLGRAGPPQPRRARR) the chain is on the cytoplasmic side. A helical; Signal-anchor for type II membrane protein transmembrane segment spans residues 20–39 (LLFAFTLSLSCTYLCYSFLC). The Lumenal portion of the chain corresponds to 40–367 (CCDGLGQSRL…ETVGQDFRWE (328 aa)). Positions 66–115 (LLAKSRPCDPPGPTPSEPSAPSAPAAAAPAPRLSGSNHSGSPKPGTKRLP) are disordered. The segment covering 73-83 (CDPPGPTPSEP) has biased composition (pro residues). Over residues 84-96 (SAPSAPAAAAPAP) the composition is skewed to low complexity. N102 is a glycosylation site (N-linked (GlcNAc...) asparagine). Residue 124 to 128 (KGGTR) coordinates 3'-phosphoadenylyl sulfate. Substrate-binding positions include 146-152 (EPHFFDR) and 177-180 (KTPS). The N-linked (GlcNAc...) asparagine glycan is linked to N193. R205 and S213 together coordinate 3'-phosphoadenylyl sulfate. N235 carries an N-linked (GlcNAc...) asparagine glycan. 245–246 (WN) is a binding site for substrate. N306 carries an N-linked (GlcNAc...) asparagine glycan. Cysteines 313 and 325 form a disulfide. 330–334 (KGRTH) is a 3'-phosphoadenylyl sulfate binding site.

This sequence belongs to the sulfotransferase 1 family.

It is found in the golgi apparatus membrane. It carries out the reaction alpha-D-glucosaminyl-[heparan sulfate](n) + 3'-phosphoadenylyl sulfate = 3-sulfo-alpha-D-glucosaminyl-[heparan sulfate](n) + adenosine 3',5'-bisphosphate + H(+). Functionally, sulfotransferase that utilizes 3'-phospho-5'-adenylyl sulfate (PAPS) to catalyze the transfer of a sulfo group to an N-unsubstituted glucosamine linked to a 2-O-sulfo iduronic acid unit on heparan sulfate. Catalyzes the O-sulfation of glucosamine in GlcA2S-GlcNS. Unlike HS3ST1/3-OST-1, does not convert non-anticoagulant heparan sulfate to anticoagulant heparan sulfate. This chain is Heparan sulfate glucosamine 3-O-sulfotransferase 2 (Hs3st2), found in Mus musculus (Mouse).